A 246-amino-acid chain; its full sequence is Ribonuclease PH (246 aa).

The interval 67-87 (NMLPGSTSPRKRRDRSGKVDG) is disordered. Phosphate is bound by residues arginine 88 and 126–128 (GTR).

The protein belongs to the RNase PH family. As to quaternary structure, homohexameric ring arranged as a trimer of dimers.

It carries out the reaction tRNA(n+1) + phosphate = tRNA(n) + a ribonucleoside 5'-diphosphate. Its function is as follows. Phosphorolytic 3'-5' exoribonuclease that plays an important role in tRNA 3'-end maturation. Removes nucleotide residues following the 3'-CCA terminus of tRNAs; can also add nucleotides to the ends of RNA molecules by using nucleoside diphosphates as substrates, but this may not be physiologically important. Probably plays a role in initiation of 16S rRNA degradation (leading to ribosome degradation) during starvation. The protein is Ribonuclease PH of Rhodopirellula baltica (strain DSM 10527 / NCIMB 13988 / SH1).